Here is a 198-residue protein sequence, read N- to C-terminus: Dual specificity protein phosphatase 14 (198 aa).

The region spanning 26 to 167 (GIAQITSSLF…LIDYESQLFG (142 aa)) is the Tyrosine-protein phosphatase domain. The Phosphocysteine intermediate role is filled by cysteine 111.

Belongs to the protein-tyrosine phosphatase family. Non-receptor class dual specificity subfamily.

The catalysed reaction is O-phospho-L-tyrosyl-[protein] + H2O = L-tyrosyl-[protein] + phosphate. It carries out the reaction O-phospho-L-seryl-[protein] + H2O = L-seryl-[protein] + phosphate. The enzyme catalyses O-phospho-L-threonyl-[protein] + H2O = L-threonyl-[protein] + phosphate. Its function is as follows. Involved in the inactivation of MAP kinases. Dephosphorylates ERK, JNK and p38 MAP-kinases. Plays a negative role in TCR signaling by dephosphorylating MAP3K7 adapter TAB1 leading to its inactivation. The sequence is that of Dual specificity protein phosphatase 14 (Dusp14) from Mus musculus (Mouse).